We begin with the raw amino-acid sequence, 270 residues long: Non-structural maintenance of chromosomes element 1 homolog (270 aa).

The RING-type; atypical zinc-finger motif lies at 185-226 (CNVCHKIAIQCQLCENCGIPLHLQCAGIYFRGIANPLCPNCK). The segment at 236–270 (LSQVSSQGPSHSQAAPVRGRNQRSRNISTVARTSR) is disordered. Composition is skewed to polar residues over residues 237 to 248 (SQVSSQGPSHSQ) and 259 to 270 (SRNISTVARTSR).

Belongs to the NSE1 family. Component of the SMC5-SMC6 complex.

The protein localises to the nucleus. The protein resides in the chromosome. Its subcellular location is the telomere. It catalyses the reaction S-ubiquitinyl-[E2 ubiquitin-conjugating enzyme]-L-cysteine + [acceptor protein]-L-lysine = [E2 ubiquitin-conjugating enzyme]-L-cysteine + N(6)-ubiquitinyl-[acceptor protein]-L-lysine.. Functionally, RING-type zinc finger-containing E3 ubiquitin ligase that assembles with melanoma antigen protein (MAGE) to catalyze the direct transfer of ubiquitin from E2 ubiquitin-conjugating enzyme to a specific substrate. Within MAGE-RING ubiquitin ligase complex, MAGE stimulates and specifies ubiquitin ligase activity likely through recruitment and/or stabilization of the E2 ubiquitin-conjugating enzyme at the E3:substrate complex. Involved in maintenance of genome integrity, DNA damage response and DNA repair. The polypeptide is Non-structural maintenance of chromosomes element 1 homolog (nsmce1) (Xenopus tropicalis (Western clawed frog)).